Reading from the N-terminus, the 462-residue chain is ATP synthase subunit beta (462 aa).

152–159 (GGAGVGKT) contacts ATP.

The protein belongs to the ATPase alpha/beta chains family. F-type ATPases have 2 components, CF(1) - the catalytic core - and CF(0) - the membrane proton channel. CF(1) has five subunits: alpha(3), beta(3), gamma(1), delta(1), epsilon(1). CF(0) has three main subunits: a(1), b(2) and c(9-12). The alpha and beta chains form an alternating ring which encloses part of the gamma chain. CF(1) is attached to CF(0) by a central stalk formed by the gamma and epsilon chains, while a peripheral stalk is formed by the delta and b chains.

Its subcellular location is the cell inner membrane. It carries out the reaction ATP + H2O + 4 H(+)(in) = ADP + phosphate + 5 H(+)(out). In terms of biological role, produces ATP from ADP in the presence of a proton gradient across the membrane. The catalytic sites are hosted primarily by the beta subunits. The polypeptide is ATP synthase subunit beta (Tolumonas auensis (strain DSM 9187 / NBRC 110442 / TA 4)).